Here is a 138-residue protein sequence, read N- to C-terminus: Small ribosomal subunit protein uS12 (138 aa).

Residues 33-55 (KEHTNVSSPQKRGVCTRVGTMTP) form a disordered region. 3-methylthioaspartic acid is present on Asp-102.

This sequence belongs to the universal ribosomal protein uS12 family. In terms of assembly, part of the 30S ribosomal subunit. Contacts proteins S8 and S17. May interact with IF1 in the 30S initiation complex.

With S4 and S5 plays an important role in translational accuracy. In terms of biological role, interacts with and stabilizes bases of the 16S rRNA that are involved in tRNA selection in the A site and with the mRNA backbone. Located at the interface of the 30S and 50S subunits, it traverses the body of the 30S subunit contacting proteins on the other side and probably holding the rRNA structure together. The combined cluster of proteins S8, S12 and S17 appears to hold together the shoulder and platform of the 30S subunit. In Bacillus licheniformis (strain ATCC 14580 / DSM 13 / JCM 2505 / CCUG 7422 / NBRC 12200 / NCIMB 9375 / NCTC 10341 / NRRL NRS-1264 / Gibson 46), this protein is Small ribosomal subunit protein uS12.